The sequence spans 125 residues: Large ribosomal subunit protein eL8 (125 aa).

This sequence belongs to the eukaryotic ribosomal protein eL8 family. Part of the 50S ribosomal subunit. Probably part of the RNase P complex.

The protein resides in the cytoplasm. In terms of biological role, multifunctional RNA-binding protein that recognizes the K-turn motif in ribosomal RNA, the RNA component of RNase P, box H/ACA, box C/D and box C'/D' sRNAs. This Nanoarchaeum equitans (strain Kin4-M) protein is Large ribosomal subunit protein eL8.